Here is an 804-residue protein sequence, read N- to C-terminus: Ribonucleoside-diphosphate reductase large subunit (804 aa).

An ATP-cone domain is found at Met-1–Asp-92. ATP is bound by residues Asn-5–Arg-6, Glu-11–Gln-17, Thr-53, and Asp-57. Ser-216 serves as a coordination point for GDP. Cys-217 and Cys-442 form a disulfide bridge. DTTP-binding positions include Asp-225–Ile-227, Lys-242, Arg-255, and Arg-262–Gly-263. Asn-425 provides a ligand contact to GDP. The Proton acceptor role is filled by Asn-425. The active-site Cysteine radical intermediate is the Cys-427. Residues Glu-429 and Thr-603 to Thr-606 contribute to the GDP site. Glu-429 serves as the catalytic Proton acceptor.

This sequence belongs to the ribonucleoside diphosphate reductase large chain family. In terms of assembly, heterodimer of a large and a small subunit.

It carries out the reaction a 2'-deoxyribonucleoside 5'-diphosphate + [thioredoxin]-disulfide + H2O = a ribonucleoside 5'-diphosphate + [thioredoxin]-dithiol. Under complex allosteric control mediated by deoxynucleoside triphosphates and ATP binding to separate specificity and activation sites on the large subunit. The type of nucleotide bound at the specificity site determines substrate preference. It seems probable that ATP makes the enzyme reduce CDP and UDP, dGTP favors ADP reduction and dTTP favors GDP reduction. Stimulated by ATP and inhibited by dATP binding to the activity site. Functionally, provides the precursors necessary for DNA synthesis. Catalyzes the biosynthesis of deoxyribonucleotides from the corresponding ribonucleotides. The sequence is that of Ribonucleoside-diphosphate reductase large subunit (RNR1) from Plasmodium falciparum (isolate FCR-3 / Gambia).